Here is a 170-residue protein sequence, read N- to C-terminus: Adenine phosphoribosyltransferase (170 aa).

Belongs to the purine/pyrimidine phosphoribosyltransferase family. Homodimer.

The protein localises to the cytoplasm. It catalyses the reaction AMP + diphosphate = 5-phospho-alpha-D-ribose 1-diphosphate + adenine. It participates in purine metabolism; AMP biosynthesis via salvage pathway; AMP from adenine: step 1/1. Catalyzes a salvage reaction resulting in the formation of AMP, that is energically less costly than de novo synthesis. The sequence is that of Adenine phosphoribosyltransferase from Thermosipho africanus (strain TCF52B).